Here is a 181-residue protein sequence, read N- to C-terminus: Adenine phosphoribosyltransferase (181 aa).

The protein belongs to the purine/pyrimidine phosphoribosyltransferase family. In terms of assembly, homodimer.

Its subcellular location is the cytoplasm. It catalyses the reaction AMP + diphosphate = 5-phospho-alpha-D-ribose 1-diphosphate + adenine. Its pathway is purine metabolism; AMP biosynthesis via salvage pathway; AMP from adenine: step 1/1. Functionally, catalyzes a salvage reaction resulting in the formation of AMP, that is energically less costly than de novo synthesis. The polypeptide is Adenine phosphoribosyltransferase (Psychromonas ingrahamii (strain DSM 17664 / CCUG 51855 / 37)).